The chain runs to 465 residues: Type II restriction enzyme BsuMI component YdjA (465 aa).

BsuMI restriction activity requires YdiR, YdiS and YdjA.

The enzyme catalyses Endonucleolytic cleavage of DNA to give specific double-stranded fragments with terminal 5'-phosphates.. Functionally, a P subtype restriction enzyme that recognizes the double-stranded sequence 5'-CTCGAG-3'; the cleavage site is unknown. The protein is Type II restriction enzyme BsuMI component YdjA (ydjA) of Bacillus subtilis (strain 168).